The chain runs to 89 residues: UPF0367 protein PMM0124 (89 aa).

Belongs to the UPF0367 family.

This is UPF0367 protein PMM0124 from Prochlorococcus marinus subsp. pastoris (strain CCMP1986 / NIES-2087 / MED4).